A 160-amino-acid chain; its full sequence is Small ribosomal subunit protein uS7 (160 aa).

The protein belongs to the universal ribosomal protein uS7 family. Part of the 30S ribosomal subunit. Contacts proteins S9 and S11.

In terms of biological role, one of the primary rRNA binding proteins, it binds directly to 16S rRNA where it nucleates assembly of the head domain of the 30S subunit. Is located at the subunit interface close to the decoding center, probably blocks exit of the E-site tRNA. The protein is Small ribosomal subunit protein uS7 of Anaplasma phagocytophilum (strain HZ).